We begin with the raw amino-acid sequence, 169 residues long: S-ribosylhomocysteine lyase (169 aa).

3 residues coordinate Fe cation: His54, His58, and Cys128.

It belongs to the LuxS family. Homodimer. The cofactor is Fe cation.

The catalysed reaction is S-(5-deoxy-D-ribos-5-yl)-L-homocysteine = (S)-4,5-dihydroxypentane-2,3-dione + L-homocysteine. Its function is as follows. Involved in the synthesis of autoinducer 2 (AI-2) which is secreted by bacteria and is used to communicate both the cell density and the metabolic potential of the environment. The regulation of gene expression in response to changes in cell density is called quorum sensing. Catalyzes the transformation of S-ribosylhomocysteine (RHC) to homocysteine (HC) and 4,5-dihydroxy-2,3-pentadione (DPD). This Shewanella putrefaciens (strain CN-32 / ATCC BAA-453) protein is S-ribosylhomocysteine lyase.